The chain runs to 371 residues: Lipoyl synthase, mitochondrial (371 aa).

Residues 1–24 (MLSRFKCSRLQLQKRAISVTKATT) constitute a mitochondrion transit peptide. A compositionally biased stretch (polar residues) spans 20–29 (TKATTTTASQ). The tract at residues 20–42 (TKATTTTASQPKRRRTTTFSDAL) is disordered. [4Fe-4S] cluster-binding residues include Cys-107, Cys-112, Cys-118, Cys-138, Cys-142, Cys-145, and Ser-353. The Radical SAM core domain maps to 121–342 (GGDSSKATAT…RDKALELGFL (222 aa)).

Belongs to the radical SAM superfamily. Lipoyl synthase family. [4Fe-4S] cluster is required as a cofactor.

It is found in the mitochondrion. It carries out the reaction [[Fe-S] cluster scaffold protein carrying a second [4Fe-4S](2+) cluster] + N(6)-octanoyl-L-lysyl-[protein] + 2 oxidized [2Fe-2S]-[ferredoxin] + 2 S-adenosyl-L-methionine + 4 H(+) = [[Fe-S] cluster scaffold protein] + N(6)-[(R)-dihydrolipoyl]-L-lysyl-[protein] + 4 Fe(3+) + 2 hydrogen sulfide + 2 5'-deoxyadenosine + 2 L-methionine + 2 reduced [2Fe-2S]-[ferredoxin]. It participates in protein modification; protein lipoylation via endogenous pathway; protein N(6)-(lipoyl)lysine from octanoyl-[acyl-carrier-protein]: step 2/2. In terms of biological role, catalyzes the radical-mediated insertion of two sulfur atoms into the C-6 and C-8 positions of the octanoyl moiety bound to the lipoyl domains of lipoate-dependent enzymes, thereby converting the octanoylated domains into lipoylated derivatives. The protein is Lipoyl synthase, mitochondrial of Lachancea thermotolerans (strain ATCC 56472 / CBS 6340 / NRRL Y-8284) (Yeast).